The chain runs to 336 residues: tRNA N6-adenosine threonylcarbamoyltransferase (336 aa).

Residues His-111, His-115, and Tyr-132 each contribute to the Fe cation site. Residues 132–136 (YLSGG), Asp-164, Asp-185, and Ser-264 each bind substrate. Asp-292 provides a ligand contact to Fe cation.

The protein belongs to the KAE1 / TsaD family. Fe(2+) is required as a cofactor.

The protein resides in the cytoplasm. It carries out the reaction L-threonylcarbamoyladenylate + adenosine(37) in tRNA = N(6)-L-threonylcarbamoyladenosine(37) in tRNA + AMP + H(+). Its function is as follows. Required for the formation of a threonylcarbamoyl group on adenosine at position 37 (t(6)A37) in tRNAs that read codons beginning with adenine. Is probably involved in the transfer of the threonylcarbamoyl moiety of threonylcarbamoyl-AMP (TC-AMP) to the N6 group of A37. This is tRNA N6-adenosine threonylcarbamoyltransferase from Sulfurisphaera tokodaii (strain DSM 16993 / JCM 10545 / NBRC 100140 / 7) (Sulfolobus tokodaii).